The primary structure comprises 365 residues: Peptide chain release factor 2 (365 aa).

Q251 carries the post-translational modification N5-methylglutamine.

It belongs to the prokaryotic/mitochondrial release factor family. Methylated by PrmC. Methylation increases the termination efficiency of RF2.

It localises to the cytoplasm. Peptide chain release factor 2 directs the termination of translation in response to the peptide chain termination codons UGA and UAA. This chain is Peptide chain release factor 2, found in Campylobacter jejuni subsp. doylei (strain ATCC BAA-1458 / RM4099 / 269.97).